A 534-amino-acid chain; its full sequence is Beta-glucosidase 31 (534 aa).

The first 22 residues, 1 to 22 (MAIKLIALVITLCVASWDVAQG), serve as a signal peptide directing secretion. An a beta-D-glucoside-binding site is contributed by glutamine 51. Asparagine 68 carries N-linked (GlcNAc...) asparagine glycosylation. A beta-D-glucoside contacts are provided by residues histidine 154 and 199–200 (NE). Residue glutamate 200 is the Proton donor of the active site. Cysteine 219 and cysteine 227 are disulfide-bonded. Tyrosine 344 provides a ligand contact to a beta-D-glucoside. Asparagine 374 carries an N-linked (GlcNAc...) asparagine glycan. Position 417 (glutamate 417) interacts with a beta-D-glucoside. Residue glutamate 417 is the Nucleophile of the active site. The N-linked (GlcNAc...) asparagine glycan is linked to asparagine 425. A beta-D-glucoside contacts are provided by residues tryptophan 467, 474–475 (EW), and phenylalanine 483.

It belongs to the glycosyl hydrolase 1 family.

The catalysed reaction is Hydrolysis of terminal, non-reducing beta-D-glucosyl residues with release of beta-D-glucose.. This chain is Beta-glucosidase 31, found in Arabidopsis thaliana (Mouse-ear cress).